Here is an 84-residue protein sequence, read N- to C-terminus: Extender of the chronological lifespan protein 2 (84 aa).

Belongs to the ecl1 family.

It is found in the nucleus. In terms of biological role, involved in chronological cell aging. The chain is Extender of the chronological lifespan protein 2 (ecl2) from Schizosaccharomyces pombe (strain 972 / ATCC 24843) (Fission yeast).